We begin with the raw amino-acid sequence, 114 residues long: Iron-sulfur cluster insertion protein ErpA (114 aa).

Residues cysteine 42, cysteine 106, and cysteine 108 each coordinate iron-sulfur cluster.

Belongs to the HesB/IscA family. As to quaternary structure, homodimer. Iron-sulfur cluster is required as a cofactor.

Functionally, required for insertion of 4Fe-4S clusters for at least IspG. The chain is Iron-sulfur cluster insertion protein ErpA from Haemophilus influenzae (strain PittGG).